A 445-amino-acid chain; its full sequence is Cyclic GMP-AMP phosphodiesterase SMPDL3A (445 aa).

Positions M1–G22 are cleaved as a signal peptide. D42 and H44 together coordinate Zn(2+). C59 and C78 are disulfide-bonded. Residue N66 is glycosylated (N-linked (GlcNAc...) asparagine). D107 provides a ligand contact to Zn(2+). H111 is an ATP binding site. An N-linked (GlcNAc...) asparagine glycan is attached at N128. N148 contacts Zn(2+). ATP-binding residues include N148 and H149. N219 and N235 each carry an N-linked (GlcNAc...) asparagine glycan. Zn(2+) contacts are provided by H249, H290, and H292. 2 N-linked (GlcNAc...) asparagine glycosylation sites follow: N353 and N364. Disulfide bonds link C417–C421 and C427–C440.

It belongs to the acid sphingomyelinase family. In terms of assembly, monomer. Homodimer; homodimerizes following 2',3'-cGAMP-binding. Requires Zn(2+) as cofactor.

Its subcellular location is the secreted. The catalysed reaction is 2',3'-cGAMP + H2O = 5'-pGpA(2'-5') + H(+). It carries out the reaction 5'-pGpA(2'-5') + H2O = 5'-GpA(2'-5') + phosphate. The enzyme catalyses a ribonucleoside 5'-triphosphate + H2O = a ribonucleoside 5'-diphosphate + phosphate + H(+). It catalyses the reaction ATP + H2O = ADP + phosphate + H(+). Its function is as follows. Cyclic-nucleotide phosphodiesterase that acts as a negative regulator of innate immunity by mediating degradation of 2',3'-cGAMP, thereby inhibiting the cGAS-STING signaling. Specifically linearizes 2',3'-cGAMP into 2'5'-bond pGpA and further hydrolyzes pGpA to produce GpA. Also has in vitro nucleotide phosphodiesterase activity with nucleoside triphosphates, such as ATP. Has in vitro activity with p-nitrophenyl-TMP. Has lower activity with nucleoside diphosphates, and no activity with nucleoside monophosphates. Has in vitro activity with CDP-choline, giving rise to CMP and phosphocholine. Has in vitro activity with CDP-ethanolamine. Does not have sphingomyelin phosphodiesterase activity. This Rattus norvegicus (Rat) protein is Cyclic GMP-AMP phosphodiesterase SMPDL3A (Smpdl3a).